A 314-amino-acid polypeptide reads, in one-letter code: UDP-N-acetylenolpyruvoylglucosamine reductase (314 aa).

In terms of domain architecture, FAD-binding PCMH-type spans Arg-31–Lys-208. Arg-187 is a catalytic residue. Catalysis depends on Ser-237, which acts as the Proton donor. Residue Glu-307 is part of the active site.

This sequence belongs to the MurB family. FAD is required as a cofactor.

The protein resides in the cytoplasm. It catalyses the reaction UDP-N-acetyl-alpha-D-muramate + NADP(+) = UDP-N-acetyl-3-O-(1-carboxyvinyl)-alpha-D-glucosamine + NADPH + H(+). Its pathway is cell wall biogenesis; peptidoglycan biosynthesis. Its function is as follows. Cell wall formation. This chain is UDP-N-acetylenolpyruvoylglucosamine reductase, found in Agathobacter rectalis (strain ATCC 33656 / DSM 3377 / JCM 17463 / KCTC 5835 / VPI 0990) (Eubacterium rectale).